A 438-amino-acid polypeptide reads, in one-letter code: Putative cytochrome P450 140 (438 aa).

Cys-381 contacts heme.

It belongs to the cytochrome P450 family. The cofactor is heme.

The sequence is that of Putative cytochrome P450 140 (cyp140) from Mycobacterium bovis (strain ATCC BAA-935 / AF2122/97).